Consider the following 368-residue polypeptide: Agmatine deiminase (368 aa).

Cysteine 357 functions as the Amidino-cysteine intermediate in the catalytic mechanism.

It belongs to the agmatine deiminase family. Homodimer.

It carries out the reaction agmatine + H2O = N-carbamoylputrescine + NH4(+). It functions in the pathway amine and polyamine biosynthesis; putrescine biosynthesis via agmatine pathway; N-carbamoylputrescine from agmatine: step 1/1. Mediates the hydrolysis of agmatine into N-carbamoylputrescine in the arginine decarboxylase (ADC) pathway of putrescine biosynthesis, a basic polyamine. The chain is Agmatine deiminase from Ectopseudomonas mendocina (strain ymp) (Pseudomonas mendocina).